A 302-amino-acid polypeptide reads, in one-letter code: Stanniocalcin-2 (302 aa).

The N-terminal stretch at 1–24 (MCAERLGQFMTLALVLATFDPARG) is a signal peptide. The disordered stretch occupies residues 23 to 44 (RGTDATNPPEGPQDRSPQQKGR). Asn-73 and Asn-74 each carry an N-linked (GlcNAc...) asparagine glycan. Residues 217–302 (RPPTAPPERQ…EQSEYSDIRR (86 aa)) are disordered. Residues 227 to 264 (PQVDRTKLSRAHHGEAGHHLPEPSSRETGRGAKGERGS) are compositionally biased toward basic and acidic residues. Ser-250 and Ser-251 each carry phosphoserine. Position 254 is a phosphothreonine (Thr-254).

It belongs to the stanniocalcin family. Homodimer; disulfide-linked.

Its subcellular location is the secreted. Functionally, has an anti-hypocalcemic action on calcium and phosphate homeostasis. This is Stanniocalcin-2 (STC2) from Pongo abelii (Sumatran orangutan).